The sequence spans 325 residues: E3 ubiquitin-protein ligase SIAH2 (325 aa).

Polar residues predominate over residues 1 to 15; that stretch reads MSRPSSTGPSANKPC. Residues 1–43 form a disordered region; sequence MSRPSSTGPSANKPCSKQPPPPQTPHAPSPAAPPAAATISAAG. Ser6 is modified (phosphoserine). Ser16 is subject to Phosphoserine; by DYRK2. A compositionally biased stretch (pro residues) spans 17-33; it reads KQPPPPQTPHAPSPAAP. Thr24 is modified (phosphothreonine; by MAPK14). Ser29 bears the Phosphoserine; by DYRK2 and MAPK14 mark. A compositionally biased stretch (low complexity) spans 34 to 43; it reads PAAATISAAG. At Ser69 the chain carries Phosphoserine; by DYRK2. The RING-type zinc-finger motif lies at 81-116; that stretch reads CPVCFDYVLPPILQCQAGHLVCNQCRQKLSCCPTCR. At Thr120 the chain carries Phosphothreonine; by DYRK2. The tract at residues 131-323 is SBD; sequence VASAVLFPCK…LGINVTISTC (193 aa). The SIAH-type zinc finger occupies 134-194; that stretch reads AVLFPCKYAT…VMSHLMHAHK (61 aa). Zn(2+)-binding residues include Cys139, Cys146, His158, Cys162, Cys169, Cys176, His188, and His193.

The protein belongs to the SINA (Seven in absentia) family. In terms of assembly, homodimer. Interacts with VAV1, without mediating its ubiquitin-mediated degradation. Probable component of some large E3 complex possibly composed of UBE2D1, SIAH2, CACYBP/SIP, SKP1, APC and TBL1X. Interacts with UBE2I. Interacts with UBE2E2. Interacts with PEG10, which may inhibit its activity. Interacts with PEG3 and EGLN2. Interacts with DYRK2. Interacts with SNCAIP. Interacts with NR1D1 and NR1D2. Interacts with DCC. Interacts with AXIN1. Phosphorylated at Thr-24 and Ser-29 by MAPK14, which mediates the degradation by the proteasome of EGLN3. Phosphorylated at Ser-29 by DYRK2; this increases the ubiquitin ligase activity and promotes degradation of EGLN3. Detected in brain (at protein level).

It is found in the cytoplasm. It localises to the nucleus. The catalysed reaction is S-ubiquitinyl-[E2 ubiquitin-conjugating enzyme]-L-cysteine + [acceptor protein]-L-lysine = [E2 ubiquitin-conjugating enzyme]-L-cysteine + N(6)-ubiquitinyl-[acceptor protein]-L-lysine.. The protein operates within protein modification; protein ubiquitination. In terms of biological role, E3 ubiquitin-protein ligase that mediates ubiquitination and subsequent proteasomal degradation of target proteins. E3 ubiquitin ligases accept ubiquitin from an E2 ubiquitin-conjugating enzyme in the form of a thioester and then directly transfers the ubiquitin to targeted substrates. Mediates E3 ubiquitin ligase activity either through direct binding to substrates or by functioning as the essential RING domain subunit of larger E3 complexes. Mediates ubiquitination and proteasomal degradation of DYRK2 in response to hypoxia. Promotes monoubiquitination of SNCA. Triggers the ubiquitin-mediated degradation of many substrates, including proteins involved in transcription regulation (GPS2, POU2AF1, PML, NCOR1), a cell surface receptor (DCC), an antiapoptotic protein (BAG1), and a protein involved in synaptic vesicle function in neurons (SYP). It is thereby involved in apoptosis, tumor suppression, cell cycle, transcription and signaling processes. Has some overlapping function with SIAH1. Triggers the ubiquitin-mediated degradation of TRAF2, whereas SIAH1 does not. Regulates cellular clock function via ubiquitination of circadian transcriptional repressors NR1D1 and NR1D2 leading to their proteasomal degradation. Plays an important role in mediating the rhythmic degradation/clearance of NR1D1 and NR1D2 contributing to their circadian profile of protein abundance. Mediates ubiquitination and degradation of EGLN2 and EGLN3 in response to the unfolded protein response (UPR), leading to their degradation and subsequent stabilization of ATF4. Also part of the Wnt signaling pathway in which it mediates the Wnt-induced ubiquitin-mediated proteasomal degradation of AXIN1. The sequence is that of E3 ubiquitin-protein ligase SIAH2 (Siah2) from Rattus norvegicus (Rat).